The sequence spans 166 residues: Large ribosomal subunit protein uL10 (166 aa).

It belongs to the universal ribosomal protein uL10 family. In terms of assembly, part of the ribosomal stalk of the 50S ribosomal subunit. The N-terminus interacts with L11 and the large rRNA to form the base of the stalk. The C-terminus forms an elongated spine to which L12 dimers bind in a sequential fashion forming a multimeric L10(L12)X complex.

Functionally, forms part of the ribosomal stalk, playing a central role in the interaction of the ribosome with GTP-bound translation factors. This Shewanella denitrificans (strain OS217 / ATCC BAA-1090 / DSM 15013) protein is Large ribosomal subunit protein uL10.